A 62-amino-acid chain; its full sequence is Large ribosomal subunit protein bL28 (62 aa).

This sequence belongs to the bacterial ribosomal protein bL28 family.

The sequence is that of Large ribosomal subunit protein bL28 from Acholeplasma laidlawii (strain PG-8A).